A 222-amino-acid polypeptide reads, in one-letter code: Putative RING finger protein ORF118 (222 aa).

An RING-type zinc finger spans residues 78-114 (CCICMAKNNRKEALPCQHNVCRDCYYKPMRNNCPVCN). The segment at 184–222 (IENRIHNNNNNNYDENNPDDLPVIHPPRRRHRQTAHISI) is disordered. The span at 189 to 198 (HNNNNNNYDE) shows a compositional bias: low complexity. The segment covering 209–222 (PPRRRHRQTAHISI) has biased composition (basic residues).

This chain is Putative RING finger protein ORF118, found in Magallana gigas (Pacific oyster).